We begin with the raw amino-acid sequence, 301 residues long: Nucleotide-binding protein Rfer_1653 (301 aa).

An ATP-binding site is contributed by 15-22 (GMSGSGKS). Position 64 to 67 (64 to 67 (DVRT)) interacts with GTP.

Belongs to the RapZ-like family.

Functionally, displays ATPase and GTPase activities. The polypeptide is Nucleotide-binding protein Rfer_1653 (Albidiferax ferrireducens (strain ATCC BAA-621 / DSM 15236 / T118) (Rhodoferax ferrireducens)).